The chain runs to 400 residues: CCA-adding enzyme (400 aa).

2 residues coordinate ATP: glycine 28 and arginine 31. Positions 28 and 31 each coordinate CTP. Mg(2+)-binding residues include aspartate 41 and aspartate 43. Arginine 112, aspartate 155, arginine 158, arginine 161, and arginine 164 together coordinate ATP. Residues arginine 112, aspartate 155, arginine 158, arginine 161, and arginine 164 each coordinate CTP.

This sequence belongs to the tRNA nucleotidyltransferase/poly(A) polymerase family. Bacterial CCA-adding enzyme type 3 subfamily. In terms of assembly, homodimer. The cofactor is Mg(2+).

It catalyses the reaction a tRNA precursor + 2 CTP + ATP = a tRNA with a 3' CCA end + 3 diphosphate. The enzyme catalyses a tRNA with a 3' CCA end + 2 CTP + ATP = a tRNA with a 3' CCACCA end + 3 diphosphate. Its function is as follows. Catalyzes the addition and repair of the essential 3'-terminal CCA sequence in tRNAs without using a nucleic acid template. Adds these three nucleotides in the order of C, C, and A to the tRNA nucleotide-73, using CTP and ATP as substrates and producing inorganic pyrophosphate. tRNA 3'-terminal CCA addition is required both for tRNA processing and repair. Also involved in tRNA surveillance by mediating tandem CCA addition to generate a CCACCA at the 3' terminus of unstable tRNAs. While stable tRNAs receive only 3'-terminal CCA, unstable tRNAs are marked with CCACCA and rapidly degraded. The protein is CCA-adding enzyme of Staphylococcus aureus (strain bovine RF122 / ET3-1).